Here is a 392-residue protein sequence, read N- to C-terminus: Formate-dependent phosphoribosylglycinamide formyltransferase (392 aa).

Residues 15–16 (EL) and Glu-75 contribute to the N(1)-(5-phospho-beta-D-ribosyl)glycinamide site. Residues Arg-107, Lys-148, 153–158 (SSGKGQ), 188–191 (EEFL), and Glu-196 each bind ATP. The ATP-grasp domain occupies 112-302 (DLASGELGLH…EFELHLRAVL (191 aa)). Residues Glu-261 and Glu-273 each coordinate Mg(2+). N(1)-(5-phospho-beta-D-ribosyl)glycinamide is bound by residues Asp-280, Lys-350, and 357–358 (RR).

The protein belongs to the PurK/PurT family. As to quaternary structure, homodimer.

It carries out the reaction N(1)-(5-phospho-beta-D-ribosyl)glycinamide + formate + ATP = N(2)-formyl-N(1)-(5-phospho-beta-D-ribosyl)glycinamide + ADP + phosphate + H(+). The protein operates within purine metabolism; IMP biosynthesis via de novo pathway; N(2)-formyl-N(1)-(5-phospho-D-ribosyl)glycinamide from N(1)-(5-phospho-D-ribosyl)glycinamide (formate route): step 1/1. Its function is as follows. Involved in the de novo purine biosynthesis. Catalyzes the transfer of formate to 5-phospho-ribosyl-glycinamide (GAR), producing 5-phospho-ribosyl-N-formylglycinamide (FGAR). Formate is provided by PurU via hydrolysis of 10-formyl-tetrahydrofolate. The sequence is that of Formate-dependent phosphoribosylglycinamide formyltransferase from Synechococcus sp. (strain CC9902).